The primary structure comprises 260 residues: Recombination-promoting nuclease RpnD (260 aa).

Belongs to the Rpn/YhgA-like nuclease family.

Its function is as follows. A low activity DNA endonuclease probably yielding 3'-hydroxyl ends. Involved in RecA-independent recombination and horizontal gene transfer. The polypeptide is Recombination-promoting nuclease RpnD (rpnD) (Escherichia coli O157:H7).